A 545-amino-acid chain; its full sequence is POTE ankyrin domain family member H (545 aa).

ANK repeat units lie at residues 180–208 (LHRA…KKDK), 209–238 (QKRT…QLNI), 242–271 (KKRT…DPNI), 275–304 (YGNT…DIES), 308–337 (HGLT…NLNA), 341–370 (YGRT…DVSS), and 374–404 (SGQT…QILK). The segment at 406 to 524 (SSENSNPEQD…KQLSEEQNTG (119 aa)) is disordered. 2 stretches are compositionally biased toward basic and acidic residues: residues 414–429 (QDLK…RLKG) and 443–458 (EINK…EMKK). A compositionally biased stretch (polar residues) spans 513-524 (TQKQLSEEQNTG).

The protein belongs to the POTE family.

The sequence is that of POTE ankyrin domain family member H (POTEH) from Homo sapiens (Human).